A 742-amino-acid polypeptide reads, in one-letter code: mRNA export factor ICP27 homolog (742 aa).

Residues 1–11 (MELHSRGRHDA) are compositionally biased toward basic and acidic residues. Positions 1-202 (MELHSRGRHD…NHHGSSAGPQ (202 aa)) are disordered. A compositionally biased stretch (basic residues) spans 72 to 85 (SHHHRPCVPARRPR). The segment covering 153–171 (KSYDNDDGEPHHHGGDSTH) has biased composition (basic and acidic residues). A compositionally biased stretch (polar residues) spans 179-202 (CPTTFGSSHPSSANNHHGSSAGPQ). Residues Cys387, His494, Cys496, and Cys501 each contribute to the Zn(2+) site. Residues 387–501 (CILDHQDGWG…QCHECQNEMC (115 aa)) form a CHC2-type zinc finger. The segment at 540–742 (ASNHATAGGQ…MLCYSDDMDD (203 aa)) is disordered. Positions 578–587 (YDKKDREGSH) are enriched in basic and acidic residues. Residues 614-626 (GELEEDEDSDDAS) show a composition bias toward acidic residues. Polar residues predominate over residues 692 to 703 (QSANGNHSTTAT).

This sequence belongs to the HHV-1 ICP27 protein family. Self-associates and forms high-molecular-mass complexes. Interacts with host DDX39A and DDX39B; these interactions are required for UL69 function in mRNA export. Interacts with host SUPT6H, EIF4A1 and PABPC1. In terms of processing, phosphorylated by UL97 and host CDK1, CDK7 and CD9. Phosphorylation by CDKs impacts on UL69 nuclear localization and activity.

Its subcellular location is the virion tegument. It is found in the virion. The protein resides in the host nucleus. It localises to the host cytoplasm. In terms of biological role, immediate early (EI) protein that plays many roles during productive infection including regulation of host cell cycle progression, regulation of viral gene expression or nuclear export of intronless viral RNAs. Acts as a transcriptional transactivator via interaction with the cellular transcription elongation factor SUPT6H and as a nuclear RNA export factor via interaction with UAP56, a component of the cellular mRNA export machinery. The chain is mRNA export factor ICP27 homolog from Human cytomegalovirus (strain Merlin) (HHV-5).